The primary structure comprises 280 residues: Energy-coupling factor transporter ATP-binding protein EcfA1 (280 aa).

The ABC transporter domain occupies 7–241 (IEVAHLKYEY…GQRLLDLGLD (235 aa)). An ATP-binding site is contributed by 41 to 48 (GHNGSGKS).

It belongs to the ABC transporter superfamily. Energy-coupling factor EcfA family. As to quaternary structure, forms a stable energy-coupling factor (ECF) transporter complex composed of 2 membrane-embedded substrate-binding proteins (S component), 2 ATP-binding proteins (A component) and 2 transmembrane proteins (T component).

It is found in the cell membrane. Its function is as follows. ATP-binding (A) component of a common energy-coupling factor (ECF) ABC-transporter complex. Unlike classic ABC transporters this ECF transporter provides the energy necessary to transport a number of different substrates. This is Energy-coupling factor transporter ATP-binding protein EcfA1 from Latilactobacillus sakei subsp. sakei (strain 23K) (Lactobacillus sakei subsp. sakei).